We begin with the raw amino-acid sequence, 250 residues long: 5'-nucleotidase SurE (250 aa).

A divalent metal cation contacts are provided by Asp-8, Asp-9, Ser-39, and Asn-92.

This sequence belongs to the SurE nucleotidase family. A divalent metal cation serves as cofactor.

It localises to the cytoplasm. The enzyme catalyses a ribonucleoside 5'-phosphate + H2O = a ribonucleoside + phosphate. Functionally, nucleotidase that shows phosphatase activity on nucleoside 5'-monophosphates. In Vibrio cholerae serotype O1 (strain ATCC 39315 / El Tor Inaba N16961), this protein is 5'-nucleotidase SurE.